The following is a 123-amino-acid chain: Small ribosomal subunit protein uS12c (123 aa).

It belongs to the universal ribosomal protein uS12 family. As to quaternary structure, part of the 30S ribosomal subunit.

Its subcellular location is the plastid. The protein resides in the chloroplast. Its function is as follows. With S4 and S5 plays an important role in translational accuracy. Located at the interface of the 30S and 50S subunits. The chain is Small ribosomal subunit protein uS12c (rps12) from Chlorella vulgaris (Green alga).